A 302-amino-acid polypeptide reads, in one-letter code: Nudix hydrolase 5 (302 aa).

In terms of domain architecture, Nudix hydrolase spans 122-254 (SHRIGIGAFV…EGNEMFKLIA (133 aa)). Positions 159 to 180 (GTIKEGESIWAGAVREVKEETD) match the Nudix box motif. Mg(2+) is bound by residues E174 and E178.

Belongs to the Nudix hydrolase family. Requires Mg(2+) as cofactor. It depends on Mn(2+) as a cofactor. Expressed in roots, stems and leaves.

Functionally, probably mediates the hydrolysis of some nucleoside diphosphate derivatives. The polypeptide is Nudix hydrolase 5 (NUDT5) (Arabidopsis thaliana (Mouse-ear cress)).